A 262-amino-acid polypeptide reads, in one-letter code: Spindlin-Z (262 aa).

Positions 1–50 (MKTPFGKSPGQRSRADAGHAGVSASMMKKRTSHKKHRNNVGPSKPISQPR) are disordered. Residues 27–38 (MKKRTSHKKHRN) show a composition bias toward basic residues.

This sequence belongs to the SPIN/STSY family. Expressed in several tissues including testis.

Its subcellular location is the nucleus. In terms of biological role, may play a role in mitosis. The chain is Spindlin-Z (SPINZ) from Gallus gallus (Chicken).